The following is a 322-amino-acid chain: MPITRMRMRPWLEMQINSNQIPGLIWINKEEMIFQIPWKHAAKHGWDINKDACLFRSWAIHTGRYKAGEKEPDPKTWKANFRCAMNSLPDIEEVKDQSRNKGSSAVRVYRMLPPLTKNQRKERKSKSSRDAKCKAKKKSCGESSPDTFSDGLSSSTLPDDHSSYTAQGYIGQDLDIEQALTPALSPCAISSTLPEWRIPVEIVPDSTSDLYNFQVSPMPSTSEAATDEDEEGKLTEDIMKLLEQSGWQQTNVDGKGYLLNEPGAQPTAVYGDFSCKEEPEVESPGGYTGLISSDLKNVDTSWLDNLLTPVRLPSIQAIPCAP.

A DNA-binding region (IRF tryptophan pentad repeat) is located at residues 5-113 (RMRMRPWLEM…SAVRVYRMLP (109 aa)). Lysine 78 carries the post-translational modification N6-acetyllysine. Positions 92–164 (EEVKDQSRNK…STLPDDHSSY (73 aa)) are disordered. Residues 141-157 (GESSPDTFSDGLSSSTL) are compositionally biased toward polar residues. Glycyl lysine isopeptide (Lys-Gly) (interchain with G-Cter in SUMO) cross-links involve residues lysine 276 and lysine 296.

It belongs to the IRF family. In terms of assembly, monomer. Homodimer. Interacts with EP300. Interacts with MYD88. Interacts with PIAS3. Interacts with SPOP. Post-translationally, phosphorylated by CK2 and this positively regulates its activity. Sumoylation represses the transcriptional activity and displays enhanced resistance to protein degradation. Sumoylated by UBE2I/UBC9 and SUMO1. Inactivates the tumor suppressor activity. Elevated levels in tumor cells. Major site is Lys-276. Sumoylation is enhanced by PIAS3. Desumoylated by SENP1 in tumor cells and appears to compete with ubiquitination on C-terminal sites. In terms of processing, ubiquitinated in a SPOP-depedent manner. Appears to compete with sumoylation on C-terminal sites.

The protein localises to the nucleus. Its subcellular location is the cytoplasm. With respect to regulation, activated by MYD88. In terms of biological role, transcriptional regulator which displays a remarkable functional diversity in the regulation of cellular responses. Regulates transcription of IFN and IFN-inducible genes, host response to viral and bacterial infections, regulation of many genes expressed during hematopoiesis, inflammation, immune responses and cell proliferation and differentiation, regulation of the cell cycle and induction of growth arrest and programmed cell death following DNA damage. Stimulates both innate and acquired immune responses through the activation of specific target genes and can act as a transcriptional activator and repressor regulating target genes by binding to an interferon-stimulated response element (ISRE) in their promoters. Has an essentail role in IFNG-dependent immunity to mycobacteria. Binds to a consensus sequence in gene promoters. Its target genes for transcriptional activation activity include: genes involved in anti-viral response, such as IFN-alpha/beta, RIGI, TNFSF10/TRAIL, ZBP1, OAS1/2, PIAS1/GBP, EIF2AK2/PKR and RSAD2/viperin; antibacterial response, such as GBP2, GBP5 and NOS2/INOS; anti-proliferative response, such as p53/TP53, LOX and CDKN1A; apoptosis, such as BBC3/PUMA, CASP1, CASP7 and CASP8; immune response, such as IL7, IL12A/B and IL15, PTGS2/COX2 and CYBB; DNA damage responses and DNA repair, such as POLQ/POLH; MHC class I expression, such as TAP1, PSMB9/LMP2, PSME1/PA28A, PSME2/PA28B and B2M and MHC class II expression, such as CIITA; metabolic enzymes, such as ACOD1/IRG1. Represses genes involved in anti-proliferative response, such as BIRC5/survivin, CCNB1, CCNE1, CDK1, CDK2 and CDK4 and in immune response, such as FOXP3, IL4, ANXA2 and TLR4. Stimulates p53/TP53-dependent transcription through enhanced recruitment of EP300 leading to increased acetylation of p53/TP53. Plays an important role in immune response directly affecting NK maturation and activity, macrophage production of IL12, Th1 development and maturation of CD8+ T-cells. Also implicated in the differentiation and maturation of dendritic cells and in the suppression of regulatory T (Treg) cells development. Acts as a tumor suppressor and plays a role not only in antagonism of tumor cell growth but also in stimulating an immune response against tumor cells. This is Interferon regulatory factor 1 (IRF1) from Sus scrofa (Pig).